Here is a 632-residue protein sequence, read N- to C-terminus: MAU2 chromatid cohesion factor homolog (632 aa).

2 TPR repeats span residues 453–486 (GGFYYVQGLHAFHKNSFHEAKRFLRETLKMANAE) and 493–526 (SCSLVLLSHVFLSIGNSKESMNMVTPAMQLASKI).

The protein belongs to the SCC4/mau-2 family. As to quaternary structure, interacts with Nipped-B to form the cohesin loading complex.

The protein resides in the nucleus. Its subcellular location is the nucleoplasm. In terms of biological role, required for association of the cohesin complex with chromatin during interphase. Plays a role in sister chromatid cohesion and normal progression through prometaphase. The chain is MAU2 chromatid cohesion factor homolog from Drosophila yakuba (Fruit fly).